A 409-amino-acid chain; its full sequence is Lissencephaly-1 homolog (409 aa).

The LisH domain maps to 7–39 (QEEELRFAVADYLQSCGYTNALEAFKKDASIPK). Residues 56-81 (SVVRLQKKVMDLELRLNNTTREMNSG) adopt a coiled-coil conformation. Residues 75–92 (TREMNSGVPTRNSRSSND) show a composition bias toward polar residues. Positions 75–105 (TREMNSGVPTRNSRSSNDWIPRPPEKHSLSG) are disordered. 7 WD repeats span residues 105–146 (GHRS…RTLR), 147–186 (GHTD…CRMT), 189–228 (GHDH…CVYN), 231–270 (GHRE…CKEE), 273–332 (GHEH…CLFS), 335–374 (GHDN…CSKS), and 377–409 (AHNH…WECR).

The protein belongs to the WD repeat LIS1/nudF family.

The protein localises to the cytoplasm. The protein resides in the cytoskeleton. Its subcellular location is the microtubule organizing center. It localises to the centrosome. In terms of biological role, positively regulates the activity of the minus-end directed microtubule motor protein dynein. May enhance dynein-mediated microtubule sliding by targeting dynein to the microtubule plus end. Required for several dynein- and microtubule-dependent processes. The protein is Lissencephaly-1 homolog of Trichoplax adhaerens (Trichoplax reptans).